Reading from the N-terminus, the 193-residue chain is MVMEVPREIIEKLEIFQKLVKKWNKSINLVSDNTIHNFWQRHILDSLQLIQYIDNKEIHLVDIGSGSGLPGIVLSIAGVAQVSLIEADLRKCIFLEKASKISNNNIQIINQRIEKIEIDCSILTCRAFSNLNTIFNCIKNISVREKFLLLKGKNYLTEIVEAKERWLFGYLIHQSITCEEGKILEVSNLTKMI.

S-adenosyl-L-methionine is bound by residues G64, L69, 113 to 114 (IE), and R126.

It belongs to the methyltransferase superfamily. RNA methyltransferase RsmG family.

It is found in the cytoplasm. The enzyme catalyses guanosine(527) in 16S rRNA + S-adenosyl-L-methionine = N(7)-methylguanosine(527) in 16S rRNA + S-adenosyl-L-homocysteine. Its function is as follows. Specifically methylates the N7 position of guanine in position 527 of 16S rRNA. This Rickettsia massiliae (strain Mtu5) protein is Ribosomal RNA small subunit methyltransferase G.